Reading from the N-terminus, the 1381-residue chain is Major capsid protein (1381 aa).

This sequence belongs to the herpesviridae major capsid protein family. As to quaternary structure, homomultimer. Makes the hexons and eleven out of twelve pentons. Interacts with triplex proteins 1/TRX1 and 2/TRX2; adjacent capsomers are linked together in groups of three by triplexes, heterotrimeric complexes composed of one molecule of TRX1 and two molecules of TRX2. Interacts with scaffold protein; this interaction allows efficient MCP transport to the host nucleus. Interacts with capsid vertex component 2/CVC2. Interacts with the small capsomere-interacting protein/SCP.

It is found in the virion. The protein resides in the host nucleus. Functionally, self-assembles to form an icosahedral capsid with a T=16 symmetry, about 200 nm in diameter, and consisting of 150 hexons and 12 pentons (total of 162 capsomers). Hexons form the edges and faces of the capsid and are each composed of six MCP molecules. In contrast, one penton is found at each of the 12 vertices. Eleven of the pentons are MCP pentamers, while the last vertex is occupied by the portal complex. The capsid is surrounded by a layer of proteinaceous material designated the tegument which, in turn, is enclosed in an envelope of host cell-derived lipids containing virus-encoded glycoproteins. This chain is Major capsid protein, found in Epstein-Barr virus (strain AG876) (HHV-4).